Reading from the N-terminus, the 512-residue chain is Cytochrome P450 26B1 (512 aa).

Heme is bound at residue C441.

It belongs to the cytochrome P450 family. Requires heme as cofactor. Highly expressed in brain, particularly in the cerebellum and pons.

The protein localises to the endoplasmic reticulum membrane. The protein resides in the microsome membrane. It catalyses the reaction all-trans-retinoate + reduced [NADPH--hemoprotein reductase] + O2 = all-trans-4-hydroxyretinoate + oxidized [NADPH--hemoprotein reductase] + H2O + H(+). It carries out the reaction all-trans-retinoate + reduced [NADPH--hemoprotein reductase] + O2 = all-trans-18-hydroxyretinoate + oxidized [NADPH--hemoprotein reductase] + H2O + H(+). A cytochrome P450 monooxygenase involved in the metabolism of retinoates (RAs), the active metabolites of vitamin A, and critical signaling molecules in animals. RAs exist as at least four different isomers: all-trans-RA (atRA), 9-cis-RA, 13-cis-RA, and 9,13-dicis-RA, where atRA is considered to be the biologically active isomer, although 9-cis-RA and 13-cis-RA also have activity. Catalyzes the hydroxylation of atRA primarily at C-4 and C-18, thereby contributing to the regulation of atRA homeostasis and signaling. Hydroxylation of atRA limits its biological activity and initiates a degradative process leading to its eventual elimination. Involved in the convertion of atRA to all-trans-4-oxo-RA. Can oxidize all-trans-13,14-dihydroretinoate (DRA) to metabolites which could include all-trans-4-oxo-DRA, all-trans-4-hydroxy-DRA, all-trans-5,8-epoxy-DRA, and all-trans-18-hydroxy-DRA. Shows preference for the following substrates: atRA &gt; 9-cis-RA &gt; 13-cis-RA. Plays a central role in germ cell development: acts by degrading RAs in the developing testis, preventing STRA8 expression, thereby leading to delay of meiosis. Required for the maintenance of the undifferentiated state of male germ cells during embryonic development in Sertoli cells, inducing arrest in G0 phase of the cell cycle and preventing meiotic entry. Plays a role in skeletal development, both at the level of patterning and in the ossification of bone and the establishment of some synovial joints. Essential for postnatal survival. Functionally, also has a significant activity in oxidation of tazarotenic acid and may therefore metabolize that xenobiotic in vivo. The protein is Cytochrome P450 26B1 (CYP26B1) of Homo sapiens (Human).